The following is a 564-amino-acid chain: Carbamoyl phosphate synthase large chain, N-terminal section (564 aa).

The interval 1-399 (MPETPNKVLI…ALQKAIRSLE (399 aa)) is carboxyphosphate synthetic domain. ATP-binding residues include arginine 127, arginine 167, glycine 173, glycine 174, glutamate 206, valine 208, glutamate 213, glycine 239, valine 240, histidine 241, glutamine 282, and glutamate 296. Residues 131–325 (RAFMKKIGEP…IARIAAKIAI (195 aa)) form the ATP-grasp domain. Mg(2+)-binding residues include glutamine 282, glutamate 296, and asparagine 298. 3 residues coordinate Mn(2+): glutamine 282, glutamate 296, and asparagine 298. The tract at residues 400–560 (IGEPGLGPSP…YSTYEEECEA (161 aa)) is oligomerization domain.

It belongs to the CarB family. As to quaternary structure, composed of two chains; the small (or glutamine) chain promotes the hydrolysis of glutamine to ammonia, which is used by the large (or ammonia) chain to synthesize carbamoyl phosphate. Tetramer of heterodimers (alpha,beta)4. Mg(2+) serves as cofactor. Mn(2+) is required as a cofactor.

The catalysed reaction is hydrogencarbonate + L-glutamine + 2 ATP + H2O = carbamoyl phosphate + L-glutamate + 2 ADP + phosphate + 2 H(+). It catalyses the reaction hydrogencarbonate + NH4(+) + 2 ATP = carbamoyl phosphate + 2 ADP + phosphate + 2 H(+). The protein operates within amino-acid biosynthesis; L-arginine biosynthesis; carbamoyl phosphate from bicarbonate: step 1/1. It functions in the pathway pyrimidine metabolism; UMP biosynthesis via de novo pathway; (S)-dihydroorotate from bicarbonate: step 1/3. In terms of biological role, large subunit of the glutamine-dependent carbamoyl phosphate synthetase (CPSase). CPSase catalyzes the formation of carbamoyl phosphate from the ammonia moiety of glutamine, carbonate, and phosphate donated by ATP, constituting the first step of 2 biosynthetic pathways, one leading to arginine and/or urea and the other to pyrimidine nucleotides. The large subunit (synthetase) binds the substrates ammonia (free or transferred from glutamine from the small subunit), hydrogencarbonate and ATP and carries out an ATP-coupled ligase reaction, activating hydrogencarbonate by forming carboxy phosphate which reacts with ammonia to form carbamoyl phosphate. This chain is Carbamoyl phosphate synthase large chain, N-terminal section (carB1), found in Methanopyrus kandleri (strain AV19 / DSM 6324 / JCM 9639 / NBRC 100938).